The following is a 507-amino-acid chain: Glycerol kinase (507 aa).

Thr-15 contacts ADP. The ATP site is built by Thr-15, Thr-16, and Ser-17. Thr-15 serves as a coordination point for sn-glycerol 3-phosphate. Arg-19 provides a ligand contact to ADP. Sn-glycerol 3-phosphate is bound by residues Arg-85, Glu-86, Tyr-137, and Asp-250. 5 residues coordinate glycerol: Arg-85, Glu-86, Tyr-137, Asp-250, and Gln-251. Residues Thr-272 and Gly-316 each contribute to the ADP site. Positions 272, 316, 320, and 417 each coordinate ATP. Gly-417 contributes to the ADP binding site.

This sequence belongs to the FGGY kinase family.

The enzyme catalyses glycerol + ATP = sn-glycerol 3-phosphate + ADP + H(+). It functions in the pathway polyol metabolism; glycerol degradation via glycerol kinase pathway; sn-glycerol 3-phosphate from glycerol: step 1/1. Its activity is regulated as follows. Inhibited by fructose 1,6-bisphosphate (FBP). In terms of biological role, key enzyme in the regulation of glycerol uptake and metabolism. Catalyzes the phosphorylation of glycerol to yield sn-glycerol 3-phosphate. In Mycoplasmopsis pulmonis (strain UAB CTIP) (Mycoplasma pulmonis), this protein is Glycerol kinase.